The chain runs to 520 residues: GMP synthase [glutamine-hydrolyzing] (520 aa).

Positions 9 to 202 (RVLIVDFGSQ…LFNIAGLKGD (194 aa)) constitute a Glutamine amidotransferase type-1 domain. C86 acts as the Nucleophile in catalysis. Residues H176 and E178 contribute to the active site. Residues 203–395 (WTMAAFRQEM…LGLAPAFVGR (193 aa)) form the GMPS ATP-PPase domain. 230 to 236 (SGGVDSS) provides a ligand contact to ATP.

Homodimer.

The enzyme catalyses XMP + L-glutamine + ATP + H2O = GMP + L-glutamate + AMP + diphosphate + 2 H(+). It participates in purine metabolism; GMP biosynthesis; GMP from XMP (L-Gln route): step 1/1. In terms of biological role, catalyzes the synthesis of GMP from XMP. This chain is GMP synthase [glutamine-hydrolyzing], found in Caulobacter vibrioides (strain ATCC 19089 / CIP 103742 / CB 15) (Caulobacter crescentus).